The following is a 294-amino-acid chain: 4-hydroxy-tetrahydrodipicolinate synthase (294 aa).

Pyruvate is bound at residue Thr-44. Tyr-132 acts as the Proton donor/acceptor in catalysis. Lys-161 (schiff-base intermediate with substrate) is an active-site residue. Ile-206 provides a ligand contact to pyruvate.

Belongs to the DapA family. As to quaternary structure, homotetramer; dimer of dimers.

The protein resides in the cytoplasm. It carries out the reaction L-aspartate 4-semialdehyde + pyruvate = (2S,4S)-4-hydroxy-2,3,4,5-tetrahydrodipicolinate + H2O + H(+). Its pathway is amino-acid biosynthesis; L-lysine biosynthesis via DAP pathway; (S)-tetrahydrodipicolinate from L-aspartate: step 3/4. With respect to regulation, is not inhibited by (S)-lysine, in contrast to E.coli DapA. Functionally, catalyzes the condensation of (S)-aspartate-beta-semialdehyde [(S)-ASA] and pyruvate to 4-hydroxy-tetrahydrodipicolinate (HTPA). This Thermotoga maritima (strain ATCC 43589 / DSM 3109 / JCM 10099 / NBRC 100826 / MSB8) protein is 4-hydroxy-tetrahydrodipicolinate synthase.